The chain runs to 309 residues: Anamorsin homolog (309 aa).

Residues 4-169 (VSPGHSVLLL…SYEVGSSAQL (166 aa)) form an N-terminal SAM-like domain region. The tract at residues 170-218 (TLSFAKKKQVEKPKLDENTAKIWSLSAVDMNDDDIDLLDPDELLDEEDL) is linker. 4 residues coordinate [2Fe-2S] cluster: Cys-230, Cys-242, Cys-245, and Cys-247. The tract at residues 230-247 (CGTGGDTKKRKACKNCTC) is fe-S binding site A. Residues Cys-270, Cys-273, Cys-281, and Cys-284 each contribute to the [4Fe-4S] cluster site. 2 short sequence motifs (cx2C motif) span residues 270–273 (CGNC) and 281–284 (CASC). The segment at 270-284 (CGNCYLGDAFRCASC) is fe-S binding site B.

It belongs to the anamorsin family. As to quaternary structure, monomer. It depends on [2Fe-2S] cluster as a cofactor. Requires [4Fe-4S] cluster as cofactor.

The protein localises to the cytoplasm. The protein resides in the mitochondrion intermembrane space. In terms of biological role, component of the cytosolic iron-sulfur (Fe-S) protein assembly (CIA) machinery. Required for the maturation of extramitochondrial Fe-S proteins. Part of an electron transfer chain functioning in an early step of cytosolic Fe-S biogenesis, facilitating the de novo assembly of a [4Fe-4S] cluster on the cytosolic Fe-S scaffold complex. Electrons are transferred from NADPH via a FAD- and FMN-containing diflavin oxidoreductase. Together with the diflavin oxidoreductase, also required for the assembly of the diferric tyrosyl radical cofactor of ribonucleotide reductase (RNR), probably by providing electrons for reduction during radical cofactor maturation in the catalytic small subunit. The sequence is that of Anamorsin homolog from Branchiostoma floridae (Florida lancelet).